We begin with the raw amino-acid sequence, 254 residues long: Alcohol dehydrogenase (254 aa).

10–33 is a binding site for NAD(+); that stretch reads FVAGLGGIGLDTSREIVKSGPKNL. Ser138 contributes to the substrate binding site. Residue Tyr151 is the Proton acceptor of the active site.

This sequence belongs to the short-chain dehydrogenases/reductases (SDR) family. Homodimer.

It catalyses the reaction a primary alcohol + NAD(+) = an aldehyde + NADH + H(+). The enzyme catalyses a secondary alcohol + NAD(+) = a ketone + NADH + H(+). The sequence is that of Alcohol dehydrogenase (Adh) from Drosophila planitibia (Fruit fly).